A 40-amino-acid polypeptide reads, in one-letter code: Photosystem II reaction center protein J (40 aa).

A helical membrane pass occupies residues 8 to 28 (IPLWLIGTVTGIPVIGLVGIF).

It belongs to the PsbJ family. PSII is composed of 1 copy each of membrane proteins PsbA, PsbB, PsbC, PsbD, PsbE, PsbF, PsbH, PsbI, PsbJ, PsbK, PsbL, PsbM, PsbT, PsbX, PsbY, PsbZ, Psb30/Ycf12, at least 3 peripheral proteins of the oxygen-evolving complex and a large number of cofactors. It forms dimeric complexes.

It is found in the plastid. Its subcellular location is the chloroplast thylakoid membrane. One of the components of the core complex of photosystem II (PSII). PSII is a light-driven water:plastoquinone oxidoreductase that uses light energy to abstract electrons from H(2)O, generating O(2) and a proton gradient subsequently used for ATP formation. It consists of a core antenna complex that captures photons, and an electron transfer chain that converts photonic excitation into a charge separation. The sequence is that of Photosystem II reaction center protein J from Cucumis sativus (Cucumber).